Here is a 104-residue protein sequence, read N- to C-terminus: Urease subunit beta (104 aa).

Belongs to the urease beta subunit family. In terms of assembly, heterotrimer of UreA (gamma), UreB (beta) and UreC (alpha) subunits. Three heterotrimers associate to form the active enzyme.

It localises to the cytoplasm. The catalysed reaction is urea + 2 H2O + H(+) = hydrogencarbonate + 2 NH4(+). It participates in nitrogen metabolism; urea degradation; CO(2) and NH(3) from urea (urease route): step 1/1. This Mycolicibacterium vanbaalenii (strain DSM 7251 / JCM 13017 / BCRC 16820 / KCTC 9966 / NRRL B-24157 / PYR-1) (Mycobacterium vanbaalenii) protein is Urease subunit beta.